Reading from the N-terminus, the 143-residue chain is Large ribosomal subunit protein uL15 (143 aa).

2 stretches are compositionally biased toward basic residues: residues 1–14 and 23–38; these read MIRK…KRGS and KKHR…GNAG. The tract at residues 1-38 is disordered; it reads MIRKSKKITKKRGSRTCGYGEAKKHRGAGHRGGRGNAG.

It belongs to the universal ribosomal protein uL15 family. In terms of assembly, part of the 50S ribosomal subunit.

In terms of biological role, binds to the 23S rRNA. In Methanococcus maripaludis (strain DSM 14266 / JCM 13030 / NBRC 101832 / S2 / LL), this protein is Large ribosomal subunit protein uL15.